We begin with the raw amino-acid sequence, 138 residues long: Ribosome maturation factor RimP (138 aa).

This sequence belongs to the RimP family.

The protein resides in the cytoplasm. In terms of biological role, required for maturation of 30S ribosomal subunits. This chain is Ribosome maturation factor RimP, found in Campylobacter concisus (strain 13826).